A 160-amino-acid chain; its full sequence is MRCPFCGNADTQVVDSRVSEEGDTIRRRRRCLSCDKRFTTYERVELAMPSVVKRDGSRTEYDAGKVRGSLSLALRKRPVSTDEVDSAVARIEETLLASGMREVPSEQIGELVMGELKRLDKVAYVRYASVYKSFEDIGEFVEAIREMQGPLLPGKKLRKD.

The segment at 3 to 34 (CPFCGNADTQVVDSRVSEEGDTIRRRRRCLSC) is a zinc-finger region. The 91-residue stretch at 49 to 139 (PSVVKRDGSR…VYKSFEDIGE (91 aa)) folds into the ATP-cone domain.

This sequence belongs to the NrdR family. Zn(2+) serves as cofactor.

Functionally, negatively regulates transcription of bacterial ribonucleotide reductase nrd genes and operons by binding to NrdR-boxes. In Bordetella bronchiseptica (strain ATCC BAA-588 / NCTC 13252 / RB50) (Alcaligenes bronchisepticus), this protein is Transcriptional repressor NrdR.